A 1255-amino-acid polypeptide reads, in one-letter code: TBC1 domain family member 1 (1255 aa).

Residue Ser-146 is modified to Phosphoserine. The interval 208–228 (RTDWEAPTGQPSAPGPRPMRK) is disordered. Residue Ser-229 is modified to Phosphoserine; by PKB/AKT1. Ser-231 carries the phosphoserine; by AMPK modification. In terms of domain architecture, PID spans 238 to 398 (LAFRKEFQDA…LHKLCERIEG (161 aa)). A Phosphoserine; by PKB/AKT1 modification is found at Ser-489. Residue Ser-497 is modified to Phosphoserine. Position 499 is a phosphothreonine; by PKB/AKT1 (Thr-499). Phosphoserine is present on residues Ser-501, Ser-519, Ser-521, Ser-559, Ser-560, Ser-564, Ser-565, and Ser-579. Disordered regions lie at residues 509–544 (GNKA…MGDK) and 559–581 (SSDD…LSPQ). Over residues 519–539 (SASVDLDSSTSSTLSNTSKEL) the composition is skewed to low complexity. Thr-590 carries the phosphothreonine modification. Disordered stretches follow at residues 595–614 (PVEC…VSQR) and 621–681 (SVST…GNAV). Ser-608 carries the post-translational modification Phosphoserine. The residue at position 621 (Ser-621) is a Phosphoserine; by PKB/AKT1. A phosphoserine mark is found at Ser-660 and Ser-661. Residues 670–679 (HNSSGEQSGN) are compositionally biased toward polar residues. Ser-697 is modified (phosphoserine; by PKB/AKT1). Ser-698 and Ser-699 each carry phosphoserine. Phosphoserine; by AMPK is present on Ser-700. Residues 764–786 (DSPSRYEDYSELGELPPRSPLEP) are disordered. Residues Ser-782 and Ser-1028 each carry the phosphoserine modification. Residues 887–1081 (GVPRHHRGEI…RVFDMIFLQG (195 aa)) form the Rab-GAP TBC domain. Residue Tyr-1039 is modified to Phosphotyrosine. At Thr-1218 the chain carries Phosphothreonine. The interval 1233 to 1255 (LRRQSARPSTPEPDCTQLEPTGD) is disordered.

Interacts with APPL2 (via BAR domain); interaction is dependent of TBC1D1 phosphorylation at Ser-229; interaction diminishes the phosphorylation of TBC1D1 at Thr-590, resulting in inhibition of SLC2A4/GLUT4 translocation and glucose uptake. In terms of processing, insulin-stimulated phosphorylation by AKT family kinases stimulates SLC2A4/GLUT4 translocation. In terms of tissue distribution, expressed in highest levels in hematopoietic cells, testis and kidney.

It localises to the nucleus. May act as a GTPase-activating protein for Rab family protein(s). May play a role in the cell cycle and differentiation of various tissues. Involved in the trafficking and translocation of GLUT4-containing vesicles and insulin-stimulated glucose uptake into cells. The protein is TBC1 domain family member 1 (Tbc1d1) of Mus musculus (Mouse).